Reading from the N-terminus, the 222-residue chain is Protein Thf1 (222 aa).

Positions 169 to 208 form a coiled coil; that stretch reads IEKVKRDLELYRSNLDKINQARSLMKELVEQERKRRAQQT. Residues 197–222 form a disordered region; that stretch reads VEQERKRRAQQTSAPPAVDASSDAPA. The segment covering 209-222 has biased composition (low complexity); it reads SAPPAVDASSDAPA.

This sequence belongs to the THF1 family.

May be involved in photosynthetic membrane biogenesis. This is Protein Thf1 from Thermosynechococcus vestitus (strain NIES-2133 / IAM M-273 / BP-1).